We begin with the raw amino-acid sequence, 486 residues long: Pup--protein ligase (486 aa).

Residue Glu33 participates in Mg(2+) binding. Residue Arg76 coordinates ATP. Tyr78 contacts Mg(2+). Asp80 (proton acceptor) is an active-site residue. Position 86 (Glu86) interacts with Mg(2+). 2 residues coordinate ATP: Thr89 and Trp451.

The protein belongs to the Pup ligase/Pup deamidase family. Pup-conjugating enzyme subfamily.

It carries out the reaction ATP + [prokaryotic ubiquitin-like protein]-L-glutamate + [protein]-L-lysine = ADP + phosphate + N(6)-([prokaryotic ubiquitin-like protein]-gamma-L-glutamyl)-[protein]-L-lysine.. Its pathway is protein degradation; proteasomal Pup-dependent pathway. It participates in protein modification; protein pupylation. Catalyzes the covalent attachment of the prokaryotic ubiquitin-like protein modifier Pup to the proteasomal substrate proteins, thereby targeting them for proteasomal degradation. This tagging system is termed pupylation. The ligation reaction involves the side-chain carboxylate of the C-terminal glutamate of Pup and the side-chain amino group of a substrate lysine. The sequence is that of Pup--protein ligase from Bifidobacterium longum (strain NCC 2705).